The primary structure comprises 620 residues: UvrABC system protein C (620 aa).

Positions 13 to 92 (DKPGVYIMKN…IKKYSPRYNI (80 aa)) constitute a GIY-YIG domain. Positions 204–239 (TSIIKNLKLEMEKAAEELEFEKAAKIRDRILAIELI) constitute a UVR domain.

The protein belongs to the UvrC family. As to quaternary structure, interacts with UvrB in an incision complex.

It is found in the cytoplasm. Functionally, the UvrABC repair system catalyzes the recognition and processing of DNA lesions. UvrC both incises the 5' and 3' sides of the lesion. The N-terminal half is responsible for the 3' incision and the C-terminal half is responsible for the 5' incision. This is UvrABC system protein C from Clostridium perfringens (strain SM101 / Type A).